A 1113-amino-acid polypeptide reads, in one-letter code: Cytospin-A (1113 aa).

A disordered region spans residues methionine 1 to aspartate 160. A compositionally biased stretch (polar residues) spans alanine 59–threonine 103. The span at serine 145–serine 154 shows a compositional bias: basic and acidic residues. The stretch at alanine 220–glycine 259 forms a coiled coil. Residues alanine 284–glutamate 374 are disordered. The span at serine 338–alanine 358 shows a compositional bias: low complexity. Coiled-coil stretches lie at residues cysteine 379–leucine 433 and methionine 473–valine 791. Disordered regions lie at residues glutamine 766–aspartate 785, phenylalanine 832–proline 902, glycine 914–serine 957, and alanine 972–proline 997. Residues serine 834–serine 845 show a composition bias toward low complexity. The span at proline 856 to threonine 867 shows a compositional bias: pro residues. The span at glutamine 925–arginine 940 shows a compositional bias: polar residues. The span at arginine 941–alanine 951 shows a compositional bias: basic and acidic residues. A compositionally biased stretch (low complexity) spans alanine 972–serine 981. Residues glycine 1007 to glutamate 1112 enclose the Calponin-homology (CH) domain.

Belongs to the cytospin-A family. As to quaternary structure, may interact with both microtubules and actin cytoskeleton.

It is found in the cytoplasm. The protein resides in the cytoskeleton. It localises to the spindle. Its subcellular location is the cell junction. The protein localises to the gap junction. Involved in cytokinesis and spindle organization. May play a role in actin cytoskeleton organization and microtubule stabilization and hence required for proper cell adhesion and migration. The polypeptide is Cytospin-A (specc1l) (Tetraodon nigroviridis (Spotted green pufferfish)).